We begin with the raw amino-acid sequence, 1862 residues long: Transient receptor potential cation channel subfamily M member 7 (1862 aa).

M1 carries the post-translational modification N-acetylmethionine. Topologically, residues 1 to 850 (MSQKSWIEST…ITRKFYAFYH (850 aa)) are cytoplasmic. A Phosphoserine modification is found at S101. Residues 544-554 (NRRSGRNASSS) are compositionally biased toward low complexity. Residues 544 to 574 (NRRSGRNASSSTPQLRKSHETFGNRADKKEK) are disordered. Over residues 560 to 573 (KSHETFGNRADKKE) the composition is skewed to basic and acidic residues. Residues 851–876 (APIVKFWFNTLAYLGFLMLYTFVVLV) form a helical membrane-spanning segment. At 877 to 882 (QMEQLP) the chain is on the extracellular side. A helical membrane pass occupies residues 883-904 (SVQEWIVIAYIFTYAIEKIREV). At 905–923 (FMSEAGKISQKIKVWFSDY) the chain is on the cytoplasmic side. A helical membrane pass occupies residues 924 to 943 (FNVSDTIAIISFFVGFGLRF). The Extracellular segment spans residues 944–956 (GAKWNYINAYDNH). The chain crosses the membrane as a helical span at residues 957–980 (VFVAGRLIYCLNIIFWYVRLLDFL). Residues 981–999 (AVNQQAGPYVMMIGKMVAN) are Cytoplasmic-facing. Residues 1000 to 1023 (MFYIVVIMALVLLSFGVPRKAILY) form a helical membrane-spanning segment. Topologically, residues 1024–1025 (PH) are extracellular. The segment at residues 1026-1066 (EEPSWSLAKDIVFHPYWMIFGEVYAYEIDVCANDSALPTIC) is an intramembrane region (pore-forming). Residues 1067–1069 (GPG) lie on the Extracellular side of the membrane. The chain crosses the membrane as a helical span at residues 1070-1098 (TWLTPFLQAVYLFVQYIIMVNLLIAFFNN). Over 1099 to 1862 (VYLQVKAISN…EATNSVRLML (764 aa)) the chain is Cytoplasmic. Residues C1143, C1144, and C1146 are each lipidated (S-palmitoyl cysteine). T1163 carries the post-translational modification Phosphothreonine. 5 positions are modified to phosphoserine: S1191, S1193, S1224, S1255, and S1258. A coiled-coil region spans residues 1198-1250 (RVTFERVEQMSIQIKEVGDRVNYIKRSLQSLDSQIGHLQDLSALTVDTLKTLT). Residue T1265 is modified to Phosphothreonine. 9 positions are modified to phosphoserine: S1300, S1357, S1360, S1385, S1386, S1389, S1394, S1395, and S1403. Residues 1380–1418 (NQKLGSSPNSSPHMSSPPTKFSVSTPSQPSCKSHLESTT) form a disordered region. Residues 1385–1397 (SSPNSSPHMSSPP) are compositionally biased toward low complexity. The span at 1398 to 1410 (TKFSVSTPSQPSC) shows a compositional bias: polar residues. A Phosphothreonine modification is found at T1404. S1406 and S1445 each carry phosphoserine. T1454 carries the phosphothreonine modification. S1455 bears the Phosphoserine mark. T1466 and T1470 each carry phosphothreonine. Residues 1485-1511 (TPTSLHSEQESCSRRASTEDSPDVDSR) are disordered. S1491, S1497, S1501, S1510, and S1530 each carry phosphoserine. The segment covering 1491-1502 (SEQESCSRRAST) has biased composition (basic and acidic residues). T1534 is modified (phosphothreonine). S1540 is modified (phosphoserine). Residue T1548 is modified to Phosphothreonine. A phosphoserine mark is found at S1564 and S1566. T1580 carries the phosphothreonine modification. The Alpha-type protein kinase domain maps to 1591-1821 (ILNNSMSSWS…CCRKLKLPDL (231 aa)). 2 positions are modified to phosphoserine: S1595 and S1612. Residues G1618, G1619, L1620, R1621, and K1645 each coordinate ADP. A Phosphoserine modification is found at S1657. T1682 is modified (phosphothreonine). Positions 1717, 1718, and 1720 each coordinate ADP. H1750 is a binding site for Zn(2+). D1764 serves as the catalytic Proton acceptor. Residue D1774 participates in ADP binding. The residue at position 1776 (S1776) is a Phosphoserine. Residues H1807, C1809, and C1813 each coordinate Zn(2+). T1827 is modified (phosphothreonine). A disordered region spans residues 1840 to 1862 (DLNLQAGNSTKESEATNSVRLML). A phosphoserine mark is found at S1848 and S1857.

This sequence in the C-terminal section; belongs to the protein kinase superfamily. Alpha-type protein kinase family. ALPK subfamily. It in the N-terminal section; belongs to the transient receptor (TC 1.A.4) family. LTrpC subfamily. TRPM7 sub-subfamily. Homodimer. Homotetramer. Forms heteromers with TRPM6; heteromeric channels are functionally different from the homomeric channels. Interacts with PLCB1. Zn(2+) is required as a cofactor. Palmitoylated; palmitoylation at Cys-1143, Cys-1144 and Cys-1146 promotes TRPM7 trafficking from the Golgi to the surface membrane. Post-translationally, autophosphorylated; autophosphorylation regulates TRPM7 kinase activity towards its substrates. In terms of processing, the C-terminal kinase domain can be cleaved from the channel segment in a cell-type-specific fashion. TRPM7 is cleaved by caspase-8, dissociating the kinase from the ion-conducting pore. The cleaved kinase fragments (M7CKs) can translocate to the cell nucleus and binds chromatin-remodeling complex proteins in a Zn(2+)-dependent manner to ultimately phosphorylate specific Ser/Thr residues of histones.

The protein resides in the cell membrane. The protein localises to the cytoplasmic vesicle membrane. It localises to the nucleus. The catalysed reaction is L-seryl-[protein] + ATP = O-phospho-L-seryl-[protein] + ADP + H(+). It carries out the reaction L-threonyl-[protein] + ATP = O-phospho-L-threonyl-[protein] + ADP + H(+). It catalyses the reaction Mg(2+)(in) = Mg(2+)(out). The enzyme catalyses Ca(2+)(in) = Ca(2+)(out). The catalysed reaction is Zn(2+)(in) = Zn(2+)(out). With respect to regulation, channel displays constitutive activity. Channel activity is negatively regulated by cytosolic Mg(2+), Mg-ATP, low intracellular pH. Resting free cytosolic Mg(2+) and Mg-ATP concentrations seem to be sufficient to block native TRPM7 channel activity. TRPM7 channel activity is highly dependent on membrane levels of phosphatidylinositol 4,5 bisphosphate (PIP2). PIP2 hydrolysis negatively regulates TRPM7 channel activity. TRPM7 kinase activity does not affect channel activity. The kinase activity is controlled through the autophosphorylation of a serine/threonine-rich region located N-terminal to the catalytic domain. In terms of biological role, bifunctional protein that combines an ion channel with an intrinsic kinase domain, enabling it to modulate cellular functions either by conducting ions through the pore or by phosphorylating downstream proteins via its kinase domain. The channel is highly permeable to divalent cations, specifically calcium (Ca2+), magnesium (Mg2+) and zinc (Zn2+) and mediates their influx. Controls a wide range of biological processes such as Ca2(+), Mg(2+) and Zn(2+) homeostasis, vesicular Zn(2+) release channel and intracellular Ca(2+) signaling, embryonic development, immune responses, cell motility, proliferation and differentiation. The C-terminal alpha-kinase domain autophosphorylates cytoplasmic residues of TRPM7. TRPM7 phosphorylates SMAD2, suggesting that TRPM7 kinase may play a role in activating SMAD signaling pathways. In vitro, TRPM7 kinase phosphorylates ANXA1 (annexin A1), myosin II isoforms and a variety of proteins with diverse cellular functions. Its function is as follows. The cleaved channel exhibits substantially higher current and potentiates Fas receptor signaling. Functionally, the C-terminal kinase domain can be cleaved from the channel segment in a cell-type-specific fashion. In immune cells, the TRPM7 kinase domain is clipped from the channel domain by caspases in response to Fas-receptor stimulation. The cleaved kinase fragments can translocate to the nucleus, and bind chromatin-remodeling complex proteins in a Zn(2+)-dependent manner to ultimately phosphorylate specific Ser/Thr residues of histones known to be functionally important for cell differentiation and embryonic development. This chain is Transient receptor potential cation channel subfamily M member 7, found in Rattus norvegicus (Rat).